Reading from the N-terminus, the 364-residue chain is MQDRQKAQDYRALLLADTPLIDVRAPIEFEQGAMPGAINLPLMMDDERAAVGTCYKRQGADAALALGHRLVCGDIRQQRLEAWKAAYQRFPNGYLCCARGGQRSHIVQRWLQETGIDCPLIEGGYKALRQTAIQATWQLAQKPILLIGGCTGSGKTQLVRQQPNGVDLEGLARHRGSSFGRTLKPQLSQASFENKLAVELLKINARQTLKRWVLEDEGRTIGANHLPECLRERMAQAPIAVVEDPFALRLERLREEYFIRMHHDFTHAYGDGAGWQAYSEYLHHGLFAIRRRLGLQRFAELTDTLDRALAEQLSSGSTDGHMAWLVPLLNEYYDPMYRYQLEKKAANIVFRGTWQDVANWLKAQ.

One can recognise a Rhodanese domain in the interval 14–137 (LLADTPLIDV…LRQTAIQATW (124 aa)). Residue C97 is the S-selanylcysteine intermediate of the active site.

It belongs to the SelU family. As to quaternary structure, monomer.

It carries out the reaction 5-methylaminomethyl-2-thiouridine(34) in tRNA + selenophosphate + (2E)-geranyl diphosphate + H2O + H(+) = 5-methylaminomethyl-2-selenouridine(34) in tRNA + (2E)-thiogeraniol + phosphate + diphosphate. The enzyme catalyses 5-methylaminomethyl-2-thiouridine(34) in tRNA + (2E)-geranyl diphosphate = 5-methylaminomethyl-S-(2E)-geranyl-thiouridine(34) in tRNA + diphosphate. It catalyses the reaction 5-methylaminomethyl-S-(2E)-geranyl-thiouridine(34) in tRNA + selenophosphate + H(+) = 5-methylaminomethyl-2-(Se-phospho)selenouridine(34) in tRNA + (2E)-thiogeraniol. The catalysed reaction is 5-methylaminomethyl-2-(Se-phospho)selenouridine(34) in tRNA + H2O = 5-methylaminomethyl-2-selenouridine(34) in tRNA + phosphate. Involved in the post-transcriptional modification of the uridine at the wobble position (U34) of tRNA(Lys), tRNA(Glu) and tRNA(Gln). Catalyzes the conversion of 2-thiouridine (S2U-RNA) to 2-selenouridine (Se2U-RNA). Acts in a two-step process involving geranylation of 2-thiouridine (S2U) to S-geranyl-2-thiouridine (geS2U) and subsequent selenation of the latter derivative to 2-selenouridine (Se2U) in the tRNA chain. The chain is tRNA 2-selenouridine synthase from Salmonella typhi.